The primary structure comprises 250 residues: 2,3-bisphosphoglycerate-dependent phosphoglycerate mutase (250 aa).

Substrate-binding positions include 8-15 (RHGESQWN), 21-22 (TG), R60, 87-90 (ERHY), K98, 114-115 (RR), and 183-184 (GN). H9 acts as the Tele-phosphohistidine intermediate in catalysis. The active-site Proton donor/acceptor is the E87.

It belongs to the phosphoglycerate mutase family. BPG-dependent PGAM subfamily. As to quaternary structure, homodimer.

It catalyses the reaction (2R)-2-phosphoglycerate = (2R)-3-phosphoglycerate. The protein operates within carbohydrate degradation; glycolysis; pyruvate from D-glyceraldehyde 3-phosphate: step 3/5. Functionally, catalyzes the interconversion of 2-phosphoglycerate and 3-phosphoglycerate. The chain is 2,3-bisphosphoglycerate-dependent phosphoglycerate mutase from Bordetella petrii (strain ATCC BAA-461 / DSM 12804 / CCUG 43448).